The sequence spans 384 residues: PqqA peptide cyclase (384 aa).

The Radical SAM core domain occupies 14 to 230 (IPAPVGLLAE…EAARERLKGQ (217 aa)). The [4Fe-4S] cluster site is built by C28, C32, and C35.

It belongs to the radical SAM superfamily. PqqE family. As to quaternary structure, interacts with PqqD. The interaction is necessary for activity of PqqE. [4Fe-4S] cluster serves as cofactor.

It carries out the reaction [PQQ precursor protein] + S-adenosyl-L-methionine = E-Y cross-linked-[PQQ precursor protein] + 5'-deoxyadenosine + L-methionine + H(+). Its pathway is cofactor biosynthesis; pyrroloquinoline quinone biosynthesis. Its function is as follows. Catalyzes the cross-linking of a glutamate residue and a tyrosine residue in the PqqA protein as part of the biosynthesis of pyrroloquinoline quinone (PQQ). This Methylorubrum extorquens (strain CM4 / NCIMB 13688) (Methylobacterium extorquens) protein is PqqA peptide cyclase.